We begin with the raw amino-acid sequence, 141 residues long: Large ribosomal subunit protein uL11 (141 aa).

The protein belongs to the universal ribosomal protein uL11 family. In terms of assembly, part of the ribosomal stalk of the 50S ribosomal subunit. Interacts with L10 and the large rRNA to form the base of the stalk. L10 forms an elongated spine to which L12 dimers bind in a sequential fashion forming a multimeric L10(L12)X complex. One or more lysine residues are methylated.

Functionally, forms part of the ribosomal stalk which helps the ribosome interact with GTP-bound translation factors. This chain is Large ribosomal subunit protein uL11, found in Chlamydia pneumoniae (Chlamydophila pneumoniae).